The following is a 916-amino-acid chain: Beta-scruin (916 aa).

6 Kelch repeats span residues 82 to 133 (AVLI…YFHG), 134 to 187 (KVYL…IMDE), 188 to 235 (RIFV…NNEG), 237 to 289 (IYVV…TQNK), 291 to 341 (IWIW…KAGT), and 342 to 390 (QVFI…GIPV). Positions 393–426 (SPASDITTSKTTRSGSRKTQKTLKDKQQSDIHAR) are disordered. Basic and acidic residues predominate over residues 414–425 (TLKDKQQSDIHA). 6 Kelch repeats span residues 586-637 (VIIA…YYRG), 638-691 (AIYV…VFND), 692-739 (SIYV…SHGG), 741-793 (LWVM…VCDD), 795-847 (IWLC…ALES), and 849-896 (LYLI…TIPP).

Sperm.

In terms of biological role, may have an enzymatic role. Found the acrosomal vesicle at the anterior of sperm but not in the acrosomal process. This is Beta-scruin from Limulus polyphemus (Atlantic horseshoe crab).